The following is a 344-amino-acid chain: L-rhamnose-proton symporter (344 aa).

Helical transmembrane passes span 4-24 (AITM…CFYA), 38-58 (WSVG…ALLL), 68-88 (FSLS…IGNI), 101-121 (MGIG…TPII), 137-157 (TLLG…AGQL), 175-195 (LVLA…MNAA), 214-234 (LPSY…FCFI), 259-279 (VLLS…YAWG), 290-310 (ISWM…GLVL), and 323-343 (VLSL…IGMA).

Belongs to the L-rhamnose transporter (TC 2.A.7.6) family.

The protein localises to the cell inner membrane. The catalysed reaction is L-rhamnopyranose(in) + H(+)(in) = L-rhamnopyranose(out) + H(+)(out). Functionally, uptake of L-rhamnose across the cytoplasmic membrane with the concomitant transport of protons into the cell (symport system). The chain is L-rhamnose-proton symporter from Shigella boydii serotype 18 (strain CDC 3083-94 / BS512).